The primary structure comprises 100 residues: uncharacterized protein (100 aa).

This is an uncharacterized protein from Acheta domesticus (House cricket).